Reading from the N-terminus, the 543-residue chain is Proline--tRNA ligase, chloroplastic/mitochondrial (543 aa).

Residues 41–63 (ATAPSGTASPETKSSEVDRLRSD) are disordered. The segment covering 53-63 (KSSEVDRLRSD) has biased composition (basic and acidic residues).

It belongs to the class-II aminoacyl-tRNA synthetase family.

The protein localises to the plastid. It is found in the chloroplast. Its subcellular location is the mitochondrion. The catalysed reaction is tRNA(Pro) + L-proline + ATP = L-prolyl-tRNA(Pro) + AMP + diphosphate. Functionally, catalyzes the attachment of proline to tRNA(Pro) in a two-step reaction: proline is first activated by ATP to form Pro-AMP and then transferred to the acceptor end of tRNA(Pro). The sequence is that of Proline--tRNA ligase, chloroplastic/mitochondrial from Arabidopsis thaliana (Mouse-ear cress).